A 105-amino-acid chain; its full sequence is T cell receptor alpha variable 40 (105 aa).

An N-terminal signal peptide occupies residues 1 to 19 (MNSSLDFLILILMFGGTSS). One can recognise an Ig-like domain in the interval 20-105 (NSVKQTGQIT…DSAVYYCLLG (86 aa)). N-linked (GlcNAc...) asparagine glycosylation occurs at Asn-39. A disulfide bond links Cys-40 and Cys-102.

Alpha-beta TR is a heterodimer composed of an alpha and beta chain; disulfide-linked. The alpha-beta TR is associated with the transmembrane signaling CD3 coreceptor proteins to form the TR-CD3 (TcR or TCR). The assembly of alpha-beta TR heterodimers with CD3 occurs in the endoplasmic reticulum where a single alpha-beta TR heterodimer associates with one CD3D-CD3E heterodimer, one CD3G-CD3E heterodimer and one CD247 homodimer forming a stable octameric structure. CD3D-CD3E and CD3G-CD3E heterodimers preferentially associate with TR alpha and TR beta chains, respectively. The association of the CD247 homodimer is the last step of TcR assembly in the endoplasmic reticulum and is required for transport to the cell surface.

It localises to the cell membrane. In terms of biological role, v region of the variable domain of T cell receptor (TR) alpha chain that participates in the antigen recognition. Alpha-beta T cell receptors are antigen specific receptors which are essential to the immune response and are present on the cell surface of T lymphocytes. Recognize peptide-major histocompatibility (MH) (pMH) complexes that are displayed by antigen presenting cells (APC), a prerequisite for efficient T cell adaptive immunity against pathogens. Binding of alpha-beta TR to pMH complex initiates TR-CD3 clustering on the cell surface and intracellular activation of LCK that phosphorylates the ITAM motifs of CD3G, CD3D, CD3E and CD247 enabling the recruitment of ZAP70. In turn ZAP70 phosphorylates LAT, which recruits numerous signaling molecules to form the LAT signalosome. The LAT signalosome propagates signal branching to three major signaling pathways, the calcium, the mitogen-activated protein kinase (MAPK) kinase and the nuclear factor NF-kappa-B (NF-kB) pathways, leading to the mobilization of transcription factors that are critical for gene expression and essential for T cell growth and differentiation. The T cell repertoire is generated in the thymus, by V-(D)-J rearrangement. This repertoire is then shaped by intrathymic selection events to generate a peripheral T cell pool of self-MH restricted, non-autoaggressive T cells. Post-thymic interaction of alpha-beta TR with the pMH complexes shapes TR structural and functional avidity. The polypeptide is T cell receptor alpha variable 40 (Homo sapiens (Human)).